The following is a 259-amino-acid chain: MSRTEASGWGFSLLQILLVLAGMVWKAREGFPIVDFLDTSGDTCSWLNPCIVPPALSCWNNWPWFALHLFLYTTQLVGLSAIILPPVYLIRMLGLSTALPLISLWVLHRRRRTGKGWATTFPPRHGEEAFLWRVLWFTGLAHVASFLVATAASFLGREDMAPWHLTNTLLGTPDCSYLPCSQIAERQARLRQINEMTGTSSGFFLAVALFSQHLEMNGARLGAGLLARLFFVSLIAGPAAGAADALLLRSAFMRTRRST.

5 helical membrane passes run 5 to 25, 64 to 84, 87 to 107, 134 to 154, and 221 to 241; these read EASG…GMVW, WFAL…AIIL, VYLI…LWVL, VLWF…AASF, and LGAG…PAAG.

It belongs to the ltmS family.

Its subcellular location is the membrane. Part of the gene cluster that mediates the biosynthesis of paspalitrems, indole-diterpene (IDT) mycotoxins that are potent tremorgens in mammals. The geranylgeranyl diphosphate (GGPP) synthase idtG is proposed to catalyze the first step in IDT biosynthesis via catalysis of a series of iterative condensations of isopentenyl diphosphate (IPP) with dimethylallyl diphosphate (DMAPP), geranyl diphosphate (GPP), and farnesyl diphosphate (FPP), to form GGPP. Condensation of indole-3-glycerol phosphate with GGPP by the prenyltransferase idtC then forms 3-geranylgeranylindole (3-GGI). Epoxidation of the two terminal alkenes of the geranylgeranyl moiety by the FAD-dependent monooxygenase idtM, and cyclization by the terpene cyclase idtB then leads to the production of paspaline. The cytochrome P450 monooxygenase idtP then catalyzes oxidative elimination of the pendant methyl group at C-12 of paspaline and generates the C-10 ketone to yield 13-desoxypaxilline. The cytochrome P450 monooxygenase idtQ may catalyze the C-13 oxidation of 13-desoxypaxilline to afford paxilline. Considering that both paspalicine and paxilline were detected in C.paspali, idtQ also catalyzes the formation of paspalinine from 13-desoxypaxilline via paspalicine as an intermediate. Finally, the alpha-prenyltransferase idtF prenylates paspalinine at the C-20 or the C-21 positions to yield paspalitrems A and C, respectively. The hydroxylation of paspalitrem A at C-32 by a still unknown oxidase affords paspalitrem B. The chain is Indole-diterpene biosynthesis cluster protein S from Claviceps paspali (Rye ergot fungus).